The chain runs to 238 residues: Expansin-like protein 5 (238 aa).

Residues 1–21 (MRINFKLILIILTSFYGIINC) form the signal peptide. The 101-residue stretch at 45 to 145 (NGNCGFGKLT…VKVPCRVSGN (101 aa)) folds into the Expansin-like EG45 domain. Cystine bridges form between cysteine 48/cysteine 78 and cysteine 81/cysteine 140. Asparagine 89 carries an N-linked (GlcNAc...) asparagine glycan.

The protein belongs to the expansin family. Expansin A subfamily.

The protein localises to the secreted. May serve to lubricate the movement of the cellulose microfibrils during cell growth and wall extension and/or may serve to maintain the fluid state of the slug cell wall. The sequence is that of Expansin-like protein 5 (expl5) from Dictyostelium discoideum (Social amoeba).